Here is a 694-residue protein sequence, read N- to C-terminus: Heat shock protein homolog SSE1 (694 aa).

The segment at 671 to 694 is disordered; that stretch reads AQRSADSEAKKDATPEGDAQMDLD. Basic and acidic residues predominate over residues 675–684; the sequence is ADSEAKKDAT.

This sequence belongs to the heat shock protein 70 family.

It is found in the cytoplasm. The chain is Heat shock protein homolog SSE1 (SSE1) from Candida glabrata (strain ATCC 2001 / BCRC 20586 / JCM 3761 / NBRC 0622 / NRRL Y-65 / CBS 138) (Yeast).